Consider the following 321-residue polypeptide: MSYRLLSVDKDELVTSPCLKERNYLGLSDCSSVDSSTIPNVVGKSNLNFKATELRLGLPESQSPERETDFGLLSPRTPDEKLLFPLLPSKDNGSATTGHKNVVSGNKRGFADTWDEFSGVKGSVRPGGGINMMLSPKVKDVSKSIQEERSHAKGGLNNAPAAKAQVVGWPPIRSYRKNTMASSTSKNTDEVDGKPGLGVLFVKVSMDGAPYLRKVDLRTYTSYQQLSSALEKMFSCFTLGQCGLHGAQGRERMSEIKLKDLLHGSEFVLTYEDKDGDWMLVGDVPWEIFTETCQKLKIMKGSDSIGLAPGAVEKSKNKERV.

The EAR-like (transcriptional repression) signature appears at L54 to L58. One can recognise a PB1 domain in the interval V199 to G301.

The protein belongs to the Aux/IAA family. Homodimers and heterodimers. Interacts with TPL. Highly expressed in the whole plant.

The protein resides in the nucleus. In terms of biological role, aux/IAA proteins are short-lived transcriptional factors that function as repressors of early auxin response genes at low auxin concentrations. Repression is thought to result from the interaction with auxin response factors (ARFs), proteins that bind to the auxin-responsive promoter element (AuxRE). Formation of heterodimers with ARF proteins may alter their ability to modulate early auxin response genes expression. This is Auxin-responsive protein IAA8 (IAA8) from Arabidopsis thaliana (Mouse-ear cress).